A 1087-amino-acid chain; its full sequence is MRYAELQVTTHFSFLRAASSAEELFATARLMGIEALGVVDRNSLAGIVRALEASRATGLRLVVGCRLDLQDGMSILVYPTDRAAYSRLTRLLTLGKGRGGKANCIIHFDDVALYAEGLIGILVPDLADEVCAVQLRKIAEVFGDRAYVSLCLRRRPNDQLQLHELTNLAVKHRVKTIVTNDVLFHEHGRRQLQDVVTCIRTGMTIDDVGFERERHADRYLKPPEEMARLFPAYPEALARTMEIVERCRFSLEELVYQYPEEALILGMTAQQSLQHYTWEGVRARYPEGLPTHVEKTIRHELALIETMKYAPYFLTVFSIVRYARSQGILCQGRGSAANSAVCYVLGITSIDPETNDLLFERFVSQERDEPPDIDVDFEHERREEVIQWIYKTYGHDKAALCSTVTRYRAKGAIRDVGKALDLPEDLIRTLSSGIWSWSETVGERQVRELGLNPDDRRLTLTLRLAQQLMGAPRNLSQHPGGFVLTHDRLDDLVPIEPATMADRQVIEWDKDDIEALKFLKVDVLALGMLTCMAKAFALISEHKHEDIDLATIPQEDPATYAMIRKADTLGTFQIESRAQMSMLPRMKPRTFYDLVIQVAIVRPGPIQGDMVHPYLRRREGKEKVEYPTPELEAVLHKTLGVPLFQESAMRVAMVCAGFTGGEADQLRKSMATFKFTGGVSRFKDKLVNGMIRNGYTKEFAEKTFSQLEGFGSYGFPESHAASFALIAYASNYIKCYFPDVFCAALLNSQPMGFYAPAQIVRDAREHGVEVRPICINRSRWDCMLEPIDGSGGHAVRLGMRLVRGLATADAARIVAARADEPFTSVDDMWRRSGVPVASLVELAEADAFLPSLSLERRDALWAIKALRDEPLPLFTAAADREARAIAEQEEPEVELRQMTDGQNVVEDYSHTGLTLREHPLRFMRDDLAKRRIVTCAQAMTAHDGQWLMAAGLVLVRQRPGSAKGVMFITIEDETGIANIVVWPKLFERSRRVVLGASMMAINGRIQREGEVVHLVAQQLFDLSADLSSLAERDGAFRPPTGRGDEFAHGSPGSADSRGKAPPGVRARDILVPDLHIDTLKIKSRNFQ.

The interval 1033 to 1064 is disordered; the sequence is DGAFRPPTGRGDEFAHGSPGSADSRGKAPPGV.

This sequence belongs to the DNA polymerase type-C family. DnaE2 subfamily.

It is found in the cytoplasm. The catalysed reaction is DNA(n) + a 2'-deoxyribonucleoside 5'-triphosphate = DNA(n+1) + diphosphate. Functionally, DNA polymerase involved in damage-induced mutagenesis and translesion synthesis (TLS). It is not the major replicative DNA polymerase. The protein is Error-prone DNA polymerase 2 of Rhizobium meliloti (strain 1021) (Ensifer meliloti).